The following is a 72-amino-acid chain: uncharacterized protein (72 aa).

This sequence belongs to the asfivirus I73R family.

Its subcellular location is the virion. This is an uncharacterized protein from Ornithodoros (relapsing fever ticks).